The following is a 202-amino-acid chain: Small ribosomal subunit protein uS5 (202 aa).

Positions 50 to 113 (LKQELLNVNI…REAKLNLIPV (64 aa)) constitute an S5 DRBM domain.

The protein belongs to the universal ribosomal protein uS5 family. As to quaternary structure, part of the 30S ribosomal subunit. Contacts protein S4.

With S4 and S12 plays an important role in translational accuracy. The polypeptide is Small ribosomal subunit protein uS5 (Pyrobaculum arsenaticum (strain DSM 13514 / JCM 11321 / PZ6)).